We begin with the raw amino-acid sequence, 230 residues long: uncharacterized protein (230 aa).

Positions 118–195 (LLDEILPKEP…SKREMERLER (78 aa)) are disordered. Residues 136–146 (QKKKEKRAALK) show a composition bias toward basic residues. Basic and acidic residues-rich tracts occupy residues 160-170 (ETDLYGDRDSF) and 179-195 (QRSEFRASKREMERLER).

This is an uncharacterized protein from Schizosaccharomyces pombe (strain 972 / ATCC 24843) (Fission yeast).